We begin with the raw amino-acid sequence, 619 residues long: MLKAQIQTGLQLLQRAAVSHMRPSSCTSMLMRMRVHLAPRALQSQRSLSSSEFSPLIADAILPKCSSCGVLLQNEDRSKPGFYLAPGSSRDFRKETDVVYEKHLASLEEADRDLLLNGAQGLQVSGQKETPKSQKQPANKVSCIRCRDSHYRSQFPLDQFAVAAVSDVMHSIPAYANLAYVVSATDFPMSINEDVFRHRSPREMQFVVTKNDLFFQKNSVASKYGLQFYQDYFWRMFNVPVENVHCVSGTVDWNTEKLFDSLRDNTYFIGCVNSGKSTLIQSLVHLAHKRRLALPNAKRDRALQKIDNQVISTQQEPKTRQALIKHNRALASAFKKQNGPGASYMPGFTRGNLPFELSRSVTIYDVPGFSSAQTAQLYDFLAPQAIKALHKGQKVYKAGTYKSHYETLKSGQVLTVGGLFFLQAPKNTMFQVKNLISHPHHIFKDMEKAMDVWRSPEIYPALKNVFVVPGTRNNAPTPLVKHIVPSFYGSIDLVLRYLGYVSLKPTGAKDPESGPLVVYLPKEVDAIIRQPITKYISRTLSGRDANGNVLRKENWVQKSVTEVKRYTGKTPFTSRLIPAVGEDASADEAEVMERCVEKIKGHAVAHAQISEETKYANWL.

The N-terminal 55 residues, 1-55 (MLKAQIQTGLQLLQRAAVSHMRPSSCTSMLMRMRVHLAPRALQSQRSLSSSEFSP), are a transit peptide targeting the mitochondrion. The CP-type G domain maps to 162–372 (VAAVSDVMHS…IYDVPGFSSA (211 aa)).

Belongs to the TRAFAC class YlqF/YawG GTPase family. GEP3 subfamily.

Its subcellular location is the mitochondrion. In terms of biological role, may be involved in the mitochondrial lipid metabolism. This chain is Genetic interactor of prohibitins 3, mitochondrial (GEP3), found in Clavispora lusitaniae (strain ATCC 42720) (Yeast).